Reading from the N-terminus, the 558-residue chain is Armadillo repeat-containing X-linked protein 5 (558 aa).

Basic and acidic residues-rich tracts occupy residues 1-14 and 139-156; these read MVDS…RGKA and KSHD…REET. Disordered regions lie at residues 1–35 and 139–165; these read MVDS…GKTQ and KSHD…SSDE. Residues 300-339 form an ARM 1 repeat; the sequence is CKSRGFSLEPKEFDKLVALLKLTKDPFIHEIATMIMGISP. Residues 369 to 388 are disordered; that stretch reads HPGALSMVDDSSESSEEPKS. ARM repeat units follow at residues 422–461, 463–503, and 520–558; these read IKFE…CLSK, HANT…NINF, and SELI…ILKL.

This sequence belongs to the eutherian X-chromosome-specific Armcx family.

The polypeptide is Armadillo repeat-containing X-linked protein 5 (ARMCX5) (Homo sapiens (Human)).